We begin with the raw amino-acid sequence, 110 residues long: Thiosulfate sulfurtransferase GlpE (110 aa).

Residues 17–105 enclose the Rhodanese domain; the sequence is KQEGAVVVDI…WRATYPAETA (89 aa). Cys-65 serves as the catalytic Cysteine persulfide intermediate.

It belongs to the GlpE family.

The protein resides in the cytoplasm. It carries out the reaction thiosulfate + hydrogen cyanide = thiocyanate + sulfite + 2 H(+). The enzyme catalyses thiosulfate + [thioredoxin]-dithiol = [thioredoxin]-disulfide + hydrogen sulfide + sulfite + 2 H(+). Transferase that catalyzes the transfer of sulfur from thiosulfate to thiophilic acceptors such as cyanide or dithiols. May function in a CysM-independent thiosulfate assimilation pathway by catalyzing the conversion of thiosulfate to sulfite, which can then be used for L-cysteine biosynthesis. In Pseudomonas putida (strain GB-1), this protein is Thiosulfate sulfurtransferase GlpE.